We begin with the raw amino-acid sequence, 237 residues long: MGKRLISQNRGRGTPKYRSPSHKRKGEVKYRSYDEMEKVGKVLGTVIDVLHDPGRSAPVAKVRFANGEERLVLIPEGISVGEQIECGISAEIKPGNVLPLGEIPEGIPVYNIETIPGDGGKLVRAGGCYAHVVAHDIGKTIVKLPSGYAKVLNPACRATIGVVAGGGRKEKPFVKAGKKHHSLSAKAVAWPKVRGVAMNAVDHPYGGGRHQHLGKPSSVSRNTSPGRKVGHIASRRT.

Polar residues predominate over residues 1 to 11 (MGKRLISQNRG). Disordered stretches follow at residues 1-26 (MGKRLISQNRGRGTPKYRSPSHKRKG) and 204-237 (PYGGGRHQHLGKPSSVSRNTSPGRKVGHIASRRT). Composition is skewed to basic residues over residues 13 to 26 (GTPKYRSPSHKRKG) and 228 to 237 (KVGHIASRRT).

It belongs to the universal ribosomal protein uL2 family. As to quaternary structure, part of the 50S ribosomal subunit. Forms a bridge to the 30S subunit in the 70S ribosome.

One of the primary rRNA binding proteins. Required for association of the 30S and 50S subunits to form the 70S ribosome, for tRNA binding and peptide bond formation. It has been suggested to have peptidyltransferase activity; this is somewhat controversial. Makes several contacts with the 16S rRNA in the 70S ribosome. In Methanococcus vannielii, this protein is Large ribosomal subunit protein uL2.